The sequence spans 704 residues: Ribosomal RNA large subunit methyltransferase K/L (704 aa).

A THUMP domain is found at 43–154; sequence TMYQSLLWSR…KEKASLSLDL (112 aa).

This sequence belongs to the methyltransferase superfamily. RlmKL family.

Its subcellular location is the cytoplasm. The catalysed reaction is guanosine(2445) in 23S rRNA + S-adenosyl-L-methionine = N(2)-methylguanosine(2445) in 23S rRNA + S-adenosyl-L-homocysteine + H(+). It carries out the reaction guanosine(2069) in 23S rRNA + S-adenosyl-L-methionine = N(2)-methylguanosine(2069) in 23S rRNA + S-adenosyl-L-homocysteine + H(+). Specifically methylates the guanine in position 2445 (m2G2445) and the guanine in position 2069 (m7G2069) of 23S rRNA. The sequence is that of Ribosomal RNA large subunit methyltransferase K/L from Proteus mirabilis (strain HI4320).